Reading from the N-terminus, the 61-residue chain is Large ribosomal subunit protein bL28 (61 aa).

The segment at 1–26 (MAKDFVTGKHTRFGNTRSHALNHSRR) is disordered.

The protein belongs to the bacterial ribosomal protein bL28 family.

The sequence is that of Large ribosomal subunit protein bL28 from Pediococcus pentosaceus (strain ATCC 25745 / CCUG 21536 / LMG 10740 / 183-1w).